Consider the following 195-residue polypeptide: Inner membrane-spanning protein YciB (195 aa).

5 helical membrane passes run I34–L54, F65–F85, W88–G108, L131–F151, and F160–L180.

Belongs to the YciB family.

It localises to the cell inner membrane. Functionally, plays a role in cell envelope biogenesis, maintenance of cell envelope integrity and membrane homeostasis. This chain is Inner membrane-spanning protein YciB, found in Pseudomonas aeruginosa (strain LESB58).